The chain runs to 208 residues: Type 4 adapter protein LvgA (208 aa).

Residues 184 to 208 (GYGYPPESPRENYKHPVSSATTARK) form a disordered region.

The T4BSS is a complex nanomachine composed of several subcomplexes. This subunit is part of the Type IV Coupling Complex (T4CC), a subcomplex composed of the DotLMNYZ core and the IcmSW-LvgA adapter subunits, linked by the C-terminal tail of DotL.

It localises to the cytoplasm. Its function is as follows. Component of the Dot/Icm type IVB secretion system (T4BSS), which is used to inject bacterial effector proteins into eukaryotic host cells. Part of a subcomplex which recruits effector proteins and delivers them to the core transmembrane subcomplex. Is a critical subunit for binding a subset of effector proteins. Recognizes more than one type of binding motif. May be a critical factor that confers host specificity. Necessary for full virulence of the bacterium in guinea pigs and presumably humans. The polypeptide is Type 4 adapter protein LvgA (Legionella pneumophila).